Reading from the N-terminus, the 338-residue chain is Ferredoxin--NADP reductase (338 aa).

Residues D36, Q44, Y49, V89, F123, D290, and T331 each contribute to the FAD site.

It belongs to the ferredoxin--NADP reductase type 2 family. In terms of assembly, homodimer. The cofactor is FAD.

The enzyme catalyses 2 reduced [2Fe-2S]-[ferredoxin] + NADP(+) + H(+) = 2 oxidized [2Fe-2S]-[ferredoxin] + NADPH. This Anaplasma phagocytophilum (strain HZ) protein is Ferredoxin--NADP reductase.